Consider the following 399-residue polypeptide: Formate-dependent phosphoribosylglycinamide formyltransferase (399 aa).

Residues glutamate 22–leucine 23 and glutamate 82 contribute to the N(1)-(5-phospho-beta-D-ribosyl)glycinamide site. Residues arginine 114, lysine 155, serine 160–glutamine 165, glutamate 195–isoleucine 198, and glutamate 203 each bind ATP. The ATP-grasp domain occupies arginine 119 to leucine 308. Residues glutamate 267 and glutamate 279 each coordinate Mg(2+). Residues aspartate 286, lysine 355, and arginine 362–arginine 363 contribute to the N(1)-(5-phospho-beta-D-ribosyl)glycinamide site.

It belongs to the PurK/PurT family. Homodimer.

It catalyses the reaction N(1)-(5-phospho-beta-D-ribosyl)glycinamide + formate + ATP = N(2)-formyl-N(1)-(5-phospho-beta-D-ribosyl)glycinamide + ADP + phosphate + H(+). It functions in the pathway purine metabolism; IMP biosynthesis via de novo pathway; N(2)-formyl-N(1)-(5-phospho-D-ribosyl)glycinamide from N(1)-(5-phospho-D-ribosyl)glycinamide (formate route): step 1/1. Involved in the de novo purine biosynthesis. Catalyzes the transfer of formate to 5-phospho-ribosyl-glycinamide (GAR), producing 5-phospho-ribosyl-N-formylglycinamide (FGAR). Formate is provided by PurU via hydrolysis of 10-formyl-tetrahydrofolate. The polypeptide is Formate-dependent phosphoribosylglycinamide formyltransferase (Proteus mirabilis (strain HI4320)).